The chain runs to 421 residues: D-amino acid dehydrogenase (421 aa).

Residue 3–17 (VIVLGSGVIGVASAY) coordinates FAD.

This sequence belongs to the DadA oxidoreductase family. It depends on FAD as a cofactor.

The catalysed reaction is a D-alpha-amino acid + A + H2O = a 2-oxocarboxylate + AH2 + NH4(+). The protein operates within amino-acid degradation; D-alanine degradation; NH(3) and pyruvate from D-alanine: step 1/1. Functionally, oxidative deamination of D-amino acids. In Acinetobacter baumannii (strain ATCC 17978 / DSM 105126 / CIP 53.77 / LMG 1025 / NCDC KC755 / 5377), this protein is D-amino acid dehydrogenase.